We begin with the raw amino-acid sequence, 271 residues long: Putative protein FAM220BP (271 aa).

In Homo sapiens (Human), this protein is Putative protein FAM220BP (FAM220BP).